The following is a 436-amino-acid chain: MQVSVESTSALERRMTIGVPVERIETEVNKRLQQTASRAKIPGFRPGKVPMSVIRQRYEEAARQEALGDLIQSTFYEAIVAEKLNPAGAPSVEPKVFEKGKDLEYVATFEVFPEFEVAGFEAIEIERLQAEVTDADVDNMLEILRKQNTRFESVERAAENGDQVNIDFVGKIDGEAFAGGSAKGTQLVLGSGRMIPGFEDALVGAKAGEERVITPTFPEDYQNLDLAGKTAEFTVTVNSVAAPQLPELNEEFFAQFGVQEGGVEGFRAEVKKNMERELRQAIKTKVKNQVMEGLVAGNPIEVPKALVDNEVNRLRVQAVQQFGGNIKPDQLPAELFQEQAKRRVVLGLIVAEVVKQKELKPDEARVRELIEEMASAYQEPEQVVAWYYKNAEQLNEVRSVVLEEQVVDTVLQQAKVTDKSVSYEEAVKPAEAPQAA.

In terms of domain architecture, PPIase FKBP-type spans 161–246 (GDQVNIDFVG…VNSVAAPQLP (86 aa)).

Belongs to the FKBP-type PPIase family. Tig subfamily.

Its subcellular location is the cytoplasm. The enzyme catalyses [protein]-peptidylproline (omega=180) = [protein]-peptidylproline (omega=0). In terms of biological role, involved in protein export. Acts as a chaperone by maintaining the newly synthesized protein in an open conformation. Functions as a peptidyl-prolyl cis-trans isomerase. The sequence is that of Trigger factor from Stutzerimonas stutzeri (strain A1501) (Pseudomonas stutzeri).